We begin with the raw amino-acid sequence, 158 residues long: GTP-dependent dephospho-CoA kinase (158 aa).

GTP is bound by residues Asp35, Val36, Asp54, Lys56, Glu109, and Asp132.

Belongs to the GTP-dependent DPCK family.

It carries out the reaction 3'-dephospho-CoA + GTP = GDP + CoA + H(+). It functions in the pathway cofactor biosynthesis; coenzyme A biosynthesis. In terms of biological role, catalyzes the GTP-dependent phosphorylation of the 3'-hydroxyl group of dephosphocoenzyme A to form coenzyme A (CoA). The sequence is that of GTP-dependent dephospho-CoA kinase from Methanococcus maripaludis (strain C5 / ATCC BAA-1333).